We begin with the raw amino-acid sequence, 156 residues long: Large ribosomal subunit protein uL15 (156 aa).

Residues 26-46 (GIGCGKGKTSGRGHKGQKARS) are disordered. Positions 34–43 (TSGRGHKGQK) are enriched in basic residues.

Belongs to the universal ribosomal protein uL15 family. As to quaternary structure, part of the 50S ribosomal subunit.

In terms of biological role, binds to the 23S rRNA. This Ehrlichia canis (strain Jake) protein is Large ribosomal subunit protein uL15.